We begin with the raw amino-acid sequence, 449 residues long: 23S rRNA (uracil(1939)-C(5))-methyltransferase RlmD (449 aa).

One can recognise a TRAM domain in the interval 12–70 (SKQLSAKQSFSVHQLDHLGAGIAQHQGKVVFIPGALPSETVQAQLTEQKKNYARAKLIK). Residues cysteine 83, cysteine 89, cysteine 92, and cysteine 170 each contribute to the [4Fe-4S] cluster site. The S-adenosyl-L-methionine site is built by glutamine 282, phenylalanine 311, asparagine 316, glutamate 332, aspartate 359, and aspartate 379. The Nucleophile role is filled by cysteine 405.

It belongs to the class I-like SAM-binding methyltransferase superfamily. RNA M5U methyltransferase family. RlmD subfamily.

The catalysed reaction is uridine(1939) in 23S rRNA + S-adenosyl-L-methionine = 5-methyluridine(1939) in 23S rRNA + S-adenosyl-L-homocysteine + H(+). Functionally, catalyzes the formation of 5-methyl-uridine at position 1939 (m5U1939) in 23S rRNA. The sequence is that of 23S rRNA (uracil(1939)-C(5))-methyltransferase RlmD from Shewanella sp. (strain MR-4).